The following is a 94-amino-acid chain: Aspartyl/glutamyl-tRNA(Asn/Gln) amidotransferase subunit C (94 aa).

The protein belongs to the GatC family. Heterotrimer of A, B and C subunits.

It carries out the reaction L-glutamyl-tRNA(Gln) + L-glutamine + ATP + H2O = L-glutaminyl-tRNA(Gln) + L-glutamate + ADP + phosphate + H(+). The enzyme catalyses L-aspartyl-tRNA(Asn) + L-glutamine + ATP + H2O = L-asparaginyl-tRNA(Asn) + L-glutamate + ADP + phosphate + 2 H(+). Functionally, allows the formation of correctly charged Asn-tRNA(Asn) or Gln-tRNA(Gln) through the transamidation of misacylated Asp-tRNA(Asn) or Glu-tRNA(Gln) in organisms which lack either or both of asparaginyl-tRNA or glutaminyl-tRNA synthetases. The reaction takes place in the presence of glutamine and ATP through an activated phospho-Asp-tRNA(Asn) or phospho-Glu-tRNA(Gln). The protein is Aspartyl/glutamyl-tRNA(Asn/Gln) amidotransferase subunit C of Caldicellulosiruptor saccharolyticus (strain ATCC 43494 / DSM 8903 / Tp8T 6331).